The primary structure comprises 203 residues: GTP-binding protein ypt1 (203 aa).

GTP-binding positions include 15 to 23 (GDSGVGKSC), 33 to 40 (YTESYIST), 63 to 67 (DTAGQ), 121 to 124 (NKSD), and 151 to 153 (SAK). The Effector region signature appears at 37 to 45 (YISTIGVDF). Positions 180–203 (NNTKASVNVSPGHGVSNNSSGGCC) are disordered. Residues C202 and C203 are each lipidated (S-geranylgeranyl cysteine).

This sequence belongs to the small GTPase superfamily. Rab family.

It localises to the endoplasmic reticulum membrane. Its subcellular location is the golgi apparatus membrane. The protein localises to the cytoplasm. It is found in the preautophagosomal structure membrane. Its activity is regulated as follows. Rab activation is generally mediated by a guanine exchange factor (GEF), while inactivation through hydrolysis of bound GTP is catalyzed by a GTPase activating protein (GAP). Functionally, the small GTPases Rab are key regulators of intracellular membrane trafficking, from the formation of transport vesicles to their fusion with membranes. Rabs cycle between an inactive GDP-bound form and an active GTP-bound form that is able to recruit to membranes different set of downstream effectors directly responsible for vesicle formation, movement, tethering and fusion. Ypt-1 regulates the trafficking of secretory vesicles from the endoplasmic reticulum (ER) to the Golgi. Plays a role in the initial events of the autophagic vacuole development which take place at specialized regions of the endoplasmic reticulum. Also involved in the recycling of membrane proteins. The polypeptide is GTP-binding protein ypt1 (ypt-1) (Neurospora crassa (strain ATCC 24698 / 74-OR23-1A / CBS 708.71 / DSM 1257 / FGSC 987)).